The chain runs to 274 residues: 4-deoxy-L-threo-5-hexosulose-uronate ketol-isomerase (274 aa).

4 residues coordinate Zn(2+): His-192, His-194, Glu-199, and His-241.

It belongs to the KduI family. Zn(2+) serves as cofactor.

The catalysed reaction is 5-dehydro-4-deoxy-D-glucuronate = 3-deoxy-D-glycero-2,5-hexodiulosonate. Its pathway is glycan metabolism; pectin degradation; 2-dehydro-3-deoxy-D-gluconate from pectin: step 4/5. In terms of biological role, catalyzes the isomerization of 5-dehydro-4-deoxy-D-glucuronate to 3-deoxy-D-glycero-2,5-hexodiulosonate. The chain is 4-deoxy-L-threo-5-hexosulose-uronate ketol-isomerase from Cereibacter sphaeroides (strain ATCC 17025 / ATH 2.4.3) (Rhodobacter sphaeroides).